Consider the following 194-residue polypeptide: Putative 3-methyladenine DNA glycosylase (194 aa).

Belongs to the DNA glycosylase MPG family.

The protein is Putative 3-methyladenine DNA glycosylase of Aeropyrum pernix (strain ATCC 700893 / DSM 11879 / JCM 9820 / NBRC 100138 / K1).